The sequence spans 758 residues: Aspartyl/asparaginyl beta-hydroxylase (758 aa).

Positions 1–46 are disordered; it reads MAQRKNAKSSGNSSSSGSGSGSTSAGSSSPGARRETKHGGHKNGRK. The Cytoplasmic portion of the chain corresponds to 1–53; the sequence is MAQRKNAKSSGNSSSSGSGSGSTSAGSSSPGARRETKHGGHKNGRKGGLSGTS. Low complexity predominate over residues 9–31; sequence SSGNSSSSGSGSGSTSAGSSSPG. Ser14 carries the phosphoserine modification. The chain crosses the membrane as a helical; Signal-anchor for type II membrane protein span at residues 54 to 74; it reads FFTWFMVIALLGVWTSVAVVW. An N-linked (GlcNAc...) asparagine glycan is attached at Leu64. Topologically, residues 75–758 are lumenal; the sequence is FDLVDYEEVL…PQQRRSLPAI (684 aa). Residues Asp91, Asp93, Asp95, Asp97, and Asp102 each contribute to the Ca(2+) site. 2 disordered regions span residues 111–140 and 304–324; these read ERST…EAEP and EEQQ…EQKA. Over residues 313–324 the composition is skewed to basic and acidic residues; the sequence is TNRKTDDPEQKA. A TPR 1 repeat occupies 341 to 374; sequence IKAELDAAEKLRKRGKIEEAVNAFKELVRKYPQS. A glycan (N-linked (GlcNAc...) asparagine) is linked at Asn452. TPR repeat units follow at residues 454 to 487, 489 to 521, and 525 to 557; these read TSLK…TPND, FAKV…GDPG, and GRFY…GHFA. Trp625 provides a ligand contact to 2-oxoglutarate. Cys641 and Cys648 are oxidised to a cystine. Ser668 lines the 2-oxoglutarate pocket. Fe cation is bound at residue His679. 688–690 lines the 2-oxoglutarate pocket; it reads RMH. N-linked (GlcNAc...) asparagine glycosylation is present at Asn706. His725 contacts Fe cation. Position 735 (Arg735) interacts with 2-oxoglutarate.

The protein belongs to the aspartyl/asparaginyl beta-hydroxylase family. Monomer. Isoform 8 interacts with ORAI1 and STIM1. Isoform 4 interacts with CASQ2. It depends on Fe cation as a cofactor. In terms of tissue distribution, isoform 1 is detected in all tissues tested. Isoform 8 is mainly expressed in pancreas, heart, brain, kidney and liver. Isoform 8 is expressed in kidney (at protein level).

Its subcellular location is the endoplasmic reticulum membrane. It localises to the sarcoplasmic reticulum membrane. The catalysed reaction is L-aspartyl-[protein] + 2-oxoglutarate + O2 = 3-hydroxy-L-aspartyl-[protein] + succinate + CO2. Specifically hydroxylates an Asp or Asn residue in certain epidermal growth factor-like (EGF) domains of a number of proteins. In terms of biological role, membrane-bound Ca(2+)-sensing protein, which is a structural component of the ER-plasma membrane junctions. Isoform 8 regulates the activity of Ca(+2) released-activated Ca(+2) (CRAC) channels in T-cells. This chain is Aspartyl/asparaginyl beta-hydroxylase (ASPH), found in Homo sapiens (Human).